The primary structure comprises 258 residues: Cholera enterotoxin subunit A (258 aa).

Residues 1–18 form the signal peptide; it reads MVKIIFVFFIFLSSFSYA. NAD(+) contacts are provided by residues 25–28 and 41–43; these read RADS and MPR. Residue Glu-130 is part of the active site. A disulfide bond links Cys-205 and Cys-217.

It belongs to the enterotoxin A family. In terms of assembly, the holotoxin (choleragen) consists of a pentameric ring of B subunits whose central pore is occupied by the A subunit. The A subunit contains two chains, A1 and A2, linked by a disulfide bridge. Interaction with the host protein ARF6 causes a conformation change so that the enterotoxin subunit A1 can bind NAD and catalyze the ADP-ribosylation of the host Gs alpha.

Functionally, the A1 chain catalyzes the ADP-ribosylation of Gs alpha, a GTP-binding regulatory protein, to activate the adenylate cyclase. This leads to an overproduction of cAMP and eventually to a hypersecretion of chloride and bicarbonate followed by water, resulting in the characteristic cholera stool. The A2 chain tethers A1 to the pentameric ring. The chain is Cholera enterotoxin subunit A (ctxA) from Vibrio cholerae serotype O1 (strain ATCC 39315 / El Tor Inaba N16961).